The following is a 465-amino-acid chain: E3 ubiquitin-protein ligase parkin (465 aa).

Residues 1–76 enclose the Ubiquitin-like domain; sequence MIVFVRFNSS…VHIVQRPQRK (76 aa). S65 carries the post-translational modification Phosphoserine; by PINK1. Positions 71–96 are disordered; it reads QRPQRKSHETNASGGDKPQSTPEGSI. The tract at residues 77 to 237 is necessary for PINK1-dependent localization to mitochondria; the sequence is SHETNASGGD…LITNNSRSIP (161 aa). T80 is subject to Phosphothreonine. Polar residues predominate over residues 80-93; the sequence is TNASGGDKPQSTPE. The RING-type 0; atypical zinc-finger motif lies at 141–225; the sequence is PTYHSFFVYC…PTSDKDTSVA (85 aa). T175 carries the post-translational modification Phosphothreonine; by PINK1. The interval 204 to 238 is SYT11 binding 1; that stretch reads TRAEFFFKCGAHPTSDKDTSVALNLITNNSRSIPC. T217 is subject to Phosphothreonine. Positions 234–465 are TRIAD supradomain; it reads RSIPCIACTD…ACMGDHWFDV (232 aa). C238, C241, C253, H257, C260, C263, C289, C293, C332, and C337 together coordinate Zn(2+). The segment at 238–293 adopts an RING-type 1 zinc-finger fold; sequence CIACTDVRNPVLVFQCNHRHVICLDCFHLYCVTRLNDRQFVHDAQLGYSLPCVAGC. Residues 257–293 form an SYT11 binding 2 region; it reads HVICLDCFHLYCVTRLNDRQFVHDAQLGYSLPCVAGC. The IBR-type zinc finger occupies 313–377; that stretch reads NRYQQYGAEE…CKEAYHEGEC (65 aa). Residue K349 forms a Glycyl lysine isopeptide (Lys-Gly) (interchain with G-Cter in ISG15) linkage. Zn(2+)-binding residues include C352, C360, C365, and C368. Residue K369 forms a Glycyl lysine isopeptide (Lys-Gly) (interchain with G-Cter in ISG15) linkage. Positions 373 and 377 each coordinate Zn(2+). The segment at 378–410 is REP; it reads DSMFEASGATSQAYRVDQRAAEQARWEEASKET. C418 and C421 together coordinate Zn(2+). The segment at 418–449 adopts an RING-type 2; atypical zinc-finger fold; it reads CPRCNVPIEKNGGCMHMKCPQPQCKLEWCWNC. C431 is an active-site residue. C436, C441, C446, C449, C457, and H461 together coordinate Zn(2+).

It belongs to the RBR family. Parkin subfamily. As to quaternary structure, forms an E3 ubiquitin ligase complex with UBE2L3 or UBE2L6. Mediates 'Lys-63'-linked polyubiquitination by associating with UBE2V1. Part of a SCF-like complex, consisting of PRKN, CUL1 and FBXW7. Interacts with SNCAIP. Binds to the C2A and C2B domains of SYT11. Interacts and regulates the turnover of SEPTIN5. Part of a complex, including STUB1, HSP70 and GPR37. The amount of STUB1 in the complex increases during ER stress. STUB1 promotes the dissociation of HSP70 from PRKN and GPR37, thus facilitating PRKN-mediated GPR37 ubiquitination. HSP70 transiently associates with unfolded GPR37 and inhibits the E3 activity of PRKN, whereas, STUB1 enhances the E3 activity of PRKN through promotion of dissociation of HSP70 from PRKN-GPR37 complexes. Interacts with PSMD4 and PACRG. Interacts with LRRK2. Interacts with RANBP2. Interacts with SUMO1 but not SUMO2, which promotes nuclear localization and autoubiquitination. Interacts (via first RING-type domain) with AIMP2 (via N-terminus). Interacts with PSMA7 and RNF41. Interacts with PINK1. Forms a complex with PINK1 and PARK7. Interacts with CHPF, the interaction with isoform 2 may facilitate PRKN transport into the mitochondria. Interacts with MFN2 (phosphorylated), promotes PRKN localization in dysfunctional depolarized mitochondria. Interacts with FBXO7; this promotes translocation to dysfunctional depolarized mitochondria. Interacts with ZNF746. Interacts with heat shock protein 70 family members, including HSPA1L, HSPA1A and HSPA8; interaction HSPA1L promotes translocation to damaged mitochondria. Interacts with BAG4 and, to a lesser extent, BAG5; interaction with BAG4 inhibits translocation to damaged mitochondria. Forms a complex with PRKN and PARK7. Interacts with AMBRA1. In terms of processing, auto-ubiquitinates in an E2-dependent manner leading to its own degradation. Also polyubiquitinated by RNF41 for proteasomal degradation. Post-translationally, S-nitrosylated. Phosphorylated. Activation requires phosphorylation at Ser-65 by PINK1 and binding to PINK1 phosphorylated ubiquitin. Phosphorylation at Thr-175 by PINK1 and at Thr-217 is important for mitochondrial localization. As to expression, largely confined to neuronal elements, including fibers and neuropil. Highly expressed at the forebrain level, in pyramidal cells of layer V, in various cortical regions and cerebellum. Expressed in the nucleus of diagonal band of Broca, nucleus basalis, bed nucleus of the stria terminalis, and olfactory tubercle. Moderate expression is seen in most neurons of the subthalamic nucleus, heart, skeletal muscle and testis. Moderate expression was found in frontal cortex, parietal cortex, cerebellum, heart, skeletal muscle and testis.

It is found in the cytoplasm. The protein resides in the cytosol. It localises to the nucleus. The protein localises to the endoplasmic reticulum. Its subcellular location is the mitochondrion. It is found in the mitochondrion outer membrane. The protein resides in the cell projection. It localises to the neuron projection. The protein localises to the postsynaptic density. Its subcellular location is the presynapse. The enzyme catalyses [E2 ubiquitin-conjugating enzyme]-S-ubiquitinyl-L-cysteine + [acceptor protein]-L-lysine = [E2 ubiquitin-conjugating enzyme]-L-cysteine + [acceptor protein]-N(6)-ubiquitinyl-L-lysine.. It participates in protein modification; protein ubiquitination. In the autoinhibited state the side chain of Phe-463 inserts into a hydrophobic groove in RING-0, occluding the ubiquitin acceptor site Cys-431, whereas the REP repressor element binds RING-1 and blocks its E2-binding site. Activation of PRKN requires 2 steps: (1) phosphorylation at Ser-65 by PINK1 and (2) binding to phosphorylated ubiquitin, leading to unlock repression of the catalytic Cys-431 by the RING-0 region via an allosteric mechanism and converting PRKN to its fully-active form. According to another report, phosphorylation at Ser-65 by PINK1 is not essential for activation and only binding to phosphorylated ubiquitin is essential to unlock repression. In addition, ISG15 conjugation positively regulates its ubiquitin E3 ligase activity by suppressing the intramolecular interaction that maintains its autoinhibited conformation. Functions within a multiprotein E3 ubiquitin ligase complex, catalyzing the covalent attachment of ubiquitin moieties onto substrate proteins. Substrates include SYT11 and VDAC1. Other substrates are BCL2, CCNE1, GPR37, RHOT1/MIRO1, MFN1, MFN2, STUB1, SNCAIP, SEPTIN5, TOMM20, USP30, ZNF746, MIRO1 and AIMP2. Mediates monoubiquitination as well as 'Lys-6', 'Lys-11', 'Lys-48'-linked and 'Lys-63'-linked polyubiquitination of substrates depending on the context. Participates in the removal and/or detoxification of abnormally folded or damaged protein by mediating 'Lys-63'-linked polyubiquitination of misfolded proteins such as PARK7: 'Lys-63'-linked polyubiquitinated misfolded proteins are then recognized by HDAC6, leading to their recruitment to aggresomes, followed by degradation. Mediates 'Lys-63'-linked polyubiquitination of a 22 kDa O-linked glycosylated isoform of SNCAIP, possibly playing a role in Lewy-body formation. Mediates monoubiquitination of BCL2, thereby acting as a positive regulator of autophagy. Protects against mitochondrial dysfunction during cellular stress, by acting downstream of PINK1 to coordinate mitochondrial quality control mechanisms that remove and replace dysfunctional mitochondrial components. Depending on the severity of mitochondrial damage and/or dysfunction, activity ranges from preventing apoptosis and stimulating mitochondrial biogenesis to regulating mitochondrial dynamics and eliminating severely damaged mitochondria via mitophagy. Activation and recruitment onto the outer membrane of damaged/dysfunctional mitochondria (OMM) requires PINK1-mediated phosphorylation of both PRKN and ubiquitin. After mitochondrial damage, functions with PINK1 to mediate the decision between mitophagy or preventing apoptosis by inducing either the poly- or monoubiquitination of VDAC1, respectively; polyubiquitination of VDAC1 promotes mitophagy, while monoubiquitination of VDAC1 decreases mitochondrial calcium influx which ultimately inhibits apoptosis. When cellular stress results in irreversible mitochondrial damage, promotes the autophagic degradation of dysfunctional depolarized mitochondria (mitophagy) by promoting the ubiquitination of mitochondrial proteins such as TOMM20, RHOT1/MIRO1, MFN1 and USP30. Preferentially assembles 'Lys-6'-, 'Lys-11'- and 'Lys-63'-linked polyubiquitin chains, leading to mitophagy. The PINK1-PRKN pathway also promotes fission of damaged mitochondria by PINK1-mediated phosphorylation which promotes the PRKN-dependent degradation of mitochondrial proteins involved in fission such as MFN2. This prevents the refusion of unhealthy mitochondria with the mitochondrial network or initiates mitochondrial fragmentation facilitating their later engulfment by autophagosomes. Regulates motility of damaged mitochondria via the ubiquitination and subsequent degradation of MIRO1 and MIRO2; in motor neurons, this likely inhibits mitochondrial intracellular anterograde transport along the axons which probably increases the chance of the mitochondria undergoing mitophagy in the soma. Involved in mitochondrial biogenesis via the 'Lys-48'-linked polyubiquitination of transcriptional repressor ZNF746/PARIS which leads to its subsequent proteasomal degradation and allows activation of the transcription factor PPARGC1A. Limits the production of reactive oxygen species (ROS). Regulates cyclin-E during neuronal apoptosis. In collaboration with CHPF isoform 2, may enhance cell viability and protect cells from oxidative stress. Independently of its ubiquitin ligase activity, protects from apoptosis by the transcriptional repression of p53/TP53. May protect neurons against alpha synuclein toxicity, proteasomal dysfunction, GPR37 accumulation, and kainate-induced excitotoxicity. May play a role in controlling neurotransmitter trafficking at the presynaptic terminal and in calcium-dependent exocytosis. May represent a tumor suppressor gene. The sequence is that of E3 ubiquitin-protein ligase parkin from Rattus norvegicus (Rat).